The following is a 683-amino-acid chain: DNA-directed RNA polymerase subunit beta' (683 aa).

4 residues coordinate Zn(2+): Cys69, Cys71, Cys87, and Cys90. Asp489, Asp491, and Asp493 together coordinate Mg(2+).

This sequence belongs to the RNA polymerase beta' chain family. RpoC1 subfamily. In plastids the minimal PEP RNA polymerase catalytic core is composed of four subunits: alpha, beta, beta', and beta''. When a (nuclear-encoded) sigma factor is associated with the core the holoenzyme is formed, which can initiate transcription. Mg(2+) is required as a cofactor. Zn(2+) serves as cofactor.

It is found in the plastid. The protein localises to the chloroplast. The enzyme catalyses RNA(n) + a ribonucleoside 5'-triphosphate = RNA(n+1) + diphosphate. Its function is as follows. DNA-dependent RNA polymerase catalyzes the transcription of DNA into RNA using the four ribonucleoside triphosphates as substrates. This is DNA-directed RNA polymerase subunit beta' from Saccharum hybrid (Sugarcane).